We begin with the raw amino-acid sequence, 916 residues long: Transmembrane channel-like protein 2-A (916 aa).

A compositionally biased stretch (basic and acidic residues) spans 1-13; the sequence is MPKKSDTTRKLED. The interval 1–159 is disordered; the sequence is MPKKSDTTRK…DEEDESMSEG (159 aa). The Cytoplasmic portion of the chain corresponds to 1-271; that stretch reads MPKKSDTTRK…IFLRWMYGMN (271 aa). A compositionally biased stretch (acidic residues) spans 14–26; sequence VGIEIDGDVDSAE. Basic residues-rich tracts occupy residues 31 to 45 and 62 to 72; these read SKGK…GKRG and KGRRAANKKKP. Positions 97–107 are enriched in basic and acidic residues; sequence NVRERGDGDKK. Over residues 108 to 117 the composition is skewed to basic residues; it reads KSGKKGRRGG. The span at 118–138 shows a compositional bias: basic and acidic residues; the sequence is KKNEKGKGKDSDKDSDKDEKK. Residues 145–157 show a composition bias toward acidic residues; it reads DESDSDEEDESMS. Residues 272 to 292 traverse the membrane as a helical segment; the sequence is LVLFSLTFGLVVIPEVLMGLP. Over 293–344 the chain is Extracellular; the sequence is YGSIPRKTVPREDQDTAMDYSVLTDFNGYCKYSVLFYGYYNNQRTIGFLKFR. Residues 345 to 365 form a helical membrane-spanning segment; that stretch reads LPLSYLMVGIGTFGYSLMVVI. Residues 366-438 lie on the Cytoplasmic side of the membrane; that stretch reads RTMAKNADVG…ENIHLRRFLR (73 aa). The helical transmembrane segment at 439–459 threads the bilayer; sequence VLANFLITCTLGGSGYLIYFV. At 460 to 478 the chain is on the extracellular side; it reads VKRSQEFQNMDNLSWYEKN. A helical membrane pass occupies residues 479–499; it reads ELEIIMSLLGLVGPMLFETIA. Over 500-516 the chain is Cytoplasmic; it reads ELEEYHPRIALKWQLGR. The helical transmembrane segment at 517–537 threads the bilayer; that stretch reads IFALFLGNLYTFLLALFDEVN. Residues 538–649 lie on the Extracellular side of the membrane; that stretch reads AKLEEEESIK…EFDISGNVLG (112 aa). Residues 650-670 traverse the membrane as a helical segment; the sequence is LVFNQGMIWMGAFYAPGLVGI. Residues 671-704 lie on the Cytoplasmic side of the membrane; sequence NVLRLLSSMYYQCWAVMACNVPHERVFKASKSNN. A helical membrane pass occupies residues 705 to 725; the sequence is FYMGLLLLILFLSLLPVVYTI. The Extracellular segment spans residues 726 to 762; that stretch reads MSLPPSFDCGPFSGKERMFDVVMETIDLDLPAFMGTL. Residues 763 to 783 form a helical membrane-spanning segment; sequence FGYVANPGLVISAVLLMVLAI. Residues 784–916 are Cytoplasmic-facing; the sequence is YYLNSVSEAY…RGQGPPPRRQ (133 aa). Over residues 804–818 the composition is skewed to basic and acidic residues; it reads MQMARDEEKNRRNNK. The segment at 804 to 916 is disordered; it reads MQMARDEEKN…RGQGPPPRRQ (113 aa). The span at 883–892 shows a compositional bias: low complexity; sequence ARGPVTRAPG.

Belongs to the TMC family. As to quaternary structure, interacts (via N-terminus) with both isoforms CD1 and CD3 of PCDH15A (via cytoplasmic domain); this interaction is required for mechanotransduction of the hair cells and correct localization of PCDH15A in hair bundles of the hair cells. In adults, expression is restricted to the hair cells of inner ear and lateral line organ. Expressed at higher levels in the larval inner ear than in the lateral-line neuromasts.

The protein resides in the cell membrane. The enzyme catalyses Ca(2+)(in) = Ca(2+)(out). In terms of biological role, pore-forming subunit of the mechanotransducer (MET) non-selective cation channel complex located at tips of hair-cell stereocilia. Highly permeable to calcium and likely transports monovalent cations. The chain is Transmembrane channel-like protein 2-A from Danio rerio (Zebrafish).